The sequence spans 949 residues: Sensor histidine kinase RcsC (949 aa).

Residues 1–19 (MKYLASFRTTLKASRYMFR) lie on the Cytoplasmic side of the membrane. The helical transmembrane segment at 20 to 41 (ALALVLWLLIAFSSVFYIVNAL) threads the bilayer. Residues 42–313 (HQRESEIRQE…PVDKVLERIR (272 aa)) lie on the Periplasmic side of the membrane. The chain crosses the membrane as a helical span at residues 314–335 (MLILNAILLNVLAGAALFTLAR). Residues 336 to 949 (MYERRIFIPA…AERVRKSRDS (614 aa)) lie on the Cytoplasmic side of the membrane. The region spanning 357-425 (QFNRKIVASA…VLTSNNTNLQ (69 aa)) is the PAS domain. In terms of domain architecture, Histidine kinase spans 476-692 (TVSHELRTPL…QFTVRIPLYG (217 aa)). At H479 the chain carries Phosphohistidine; by autocatalysis. Residues 705 to 805 (SGKRCWLAVR…ARIYLIEMES (101 aa)) enclose the ABL domain. The Response regulatory domain occupies 826-940 (MILVVDDHPI…VIKQTLTLYA (115 aa)). D875 carries the post-translational modification 4-aspartylphosphate.

This sequence belongs to the RcsC family. As to quaternary structure, interacts with RcsD. Autophosphorylated. Activation probably requires a transfer of a phosphate group from a His in the transmitter domain to an Asp in the receiver domain.

It is found in the cell inner membrane. It carries out the reaction ATP + protein L-histidine = ADP + protein N-phospho-L-histidine.. Its activity is regulated as follows. The Rcs phosphorelay may be activated by RcsF. DjlA, LolA and OmpG might act as a regulator of the phosphorelay. Activity is probably up-regulated by YmgA/AriR, and possibly down-regulated by YcgZ, all 3 are connector proteins providing additional signal input into signaling system. In terms of biological role, component of the Rcs signaling system, which controls transcription of numerous genes. RcsC functions as a membrane-associated protein kinase that phosphorylates RcsD in response to environmental signals. The phosphoryl group is then transferred to the response regulator RcsB. RcsC also has phosphatase activity. The system controls expression of genes involved in colanic acid capsule synthesis, biofilm formation and cell division. This Escherichia coli (strain K12) protein is Sensor histidine kinase RcsC.